Here is a 348-residue protein sequence, read N- to C-terminus: MATLLQTSKVMKVAGLSLVVFLAACSSDQRYKRQVNGDESYLETPPLKTLNIPGGMILPLQNGEYDVPSATSTGAVGKELDIRPPLQALALLTGSRIENSAQSSKLLLENTSEYSKLWSQVVSLLAKKNYQISQKDEAAQTLTTDWITWQRADENVPYQGRYHVSVSQQDYQTTLSVSSDGLKQGEQDITDPAAIQRYNVLMLNELAGGLSQQQEEAGQNNAKDSGALTVQSGSDNTGLAQIIVRAPYNVVWNRLPYALESIGMQVTDRTRSTGSIAVTYKGRSSSDWKALGVEEPSVREGNYKLQVGDLDNRSSLQFISEKGKPLTQSENDQMVAVLEAAFSKSTDK.

The N-terminal stretch at 1 to 24 (MATLLQTSKVMKVAGLSLVVFLAA) is a signal peptide. Cys25 carries the N-palmitoyl cysteine lipid modification. The S-diacylglycerol cysteine moiety is linked to residue Cys25. A disordered region spans residues 211-230 (SQQQEEAGQNNAKDSGALTV).

It belongs to the BamC family. In terms of assembly, part of the Bam complex, which is composed of the outer membrane protein BamA, and four lipoproteins BamB, BamC, BamD and BamE.

Its subcellular location is the cell outer membrane. In terms of biological role, part of the outer membrane protein assembly complex, which is involved in assembly and insertion of beta-barrel proteins into the outer membrane. This Xenorhabdus nematophila (strain ATCC 19061 / DSM 3370 / CCUG 14189 / LMG 1036 / NCIMB 9965 / AN6) protein is Outer membrane protein assembly factor BamC.